The primary structure comprises 454 residues: Phenylalanine--tRNA ligase, mitochondrial (454 aa).

Residues 141-144 (SAHQ), R163, 170-172 (VHY), 177-179 (QME), E266, and F291 contribute to the substrate site. The interval 327 to 347 (KSISTSSSSSSSSSSSSSSTL) is disordered. Residues 328–347 (SISTSSSSSSSSSSSSSSTL) are compositionally biased toward low complexity. The FDX-ACB domain occupies 361 to 454 (SKYPSCFKDV…LENHLSVKLR (94 aa)).

The protein belongs to the class-II aminoacyl-tRNA synthetase family. As to quaternary structure, monomer.

The protein localises to the mitochondrion matrix. The catalysed reaction is tRNA(Phe) + L-phenylalanine + ATP = L-phenylalanyl-tRNA(Phe) + AMP + diphosphate + H(+). Its function is as follows. Is responsible for the charging of tRNA(Phe) with phenylalanine in mitochondrial translation. This chain is Phenylalanine--tRNA ligase, mitochondrial (mpheS), found in Dictyostelium discoideum (Social amoeba).